A 245-amino-acid polypeptide reads, in one-letter code: Probable phosphatase YcdX (245 aa).

The Zn(2+) site is built by His7, His9, His15, His40, Glu73, His101, His131, Asp192, and His194.

The protein belongs to the PHP family. Homotrimer. Zn(2+) serves as cofactor.

The sequence is that of Probable phosphatase YcdX from Shigella flexneri serotype 5b (strain 8401).